Here is a 635-residue protein sequence, read N- to C-terminus: Chaperone protein HtpG (635 aa).

Positions 1–337 are a; substrate-binding; the sequence is MELKMHNVQE…SPDLPLNISR (337 aa). The tract at residues 338–556 is b; it reads ETLQNNRVVE…EGAMDLRMER (219 aa). The c stretch occupies residues 557 to 635; the sequence is FLREQKQLNY…LNNLLGKISV (79 aa).

It belongs to the heat shock protein 90 family. In terms of assembly, homodimer.

The protein resides in the cytoplasm. Functionally, molecular chaperone. Has ATPase activity. The chain is Chaperone protein HtpG from Wolbachia pipientis wMel.